The sequence spans 681 residues: Nucleolar GTP-binding protein 1 (681 aa).

The OBG-type G domain maps to 170-341 (RTLILCGFPN…LRDRACDELL (172 aa)). GTP contacts are provided by residues 176–183 (GFPNVGKS), 222–226 (DTPGI), and 290–293 (NKVD).

This sequence belongs to the TRAFAC class OBG-HflX-like GTPase superfamily. OBG GTPase family. NOG subfamily. As to expression, ubiquitously expressed.

It is found in the nucleus. Its subcellular location is the nucleolus. Functionally, involved in the biogenesis of the 60S ribosomal subunit. Has a role in regulating longevity, growth and brood size. May regulate fat storage via the insulin/IGF pathway. This Caenorhabditis elegans protein is Nucleolar GTP-binding protein 1.